Reading from the N-terminus, the 254-residue chain is MAEAVLRVARRQLSQRGGSGAPILLRQMFEPVSCTFTYLLGDRESREAVLIDPVLETAPRDAQLIKELGLRLLYAVNTHCHADHITGSGLLRSLLPGCQSVISRLSGAQADLHIEDGDSIRFGRFALETRASPGHTPGCVTFVLNDHSMAFTGDALLIRGCGRTDFQQGCAKTLYHSVHEKIFTLPGDCLIYPAHDYHGFTVSTVEEERTLNPRLTLSCEEFVKIMGNLNLPKPQQIDFAVPANMRCGVQTPTA.

The transit peptide at 1–7 directs the protein to the mitochondrion; it reads MAEAVLR. S14 and S19 each carry phosphoserine. K66 bears the N6-acetyllysine mark. H79, H135, and D154 together coordinate Fe cation. An N6-acetyllysine; alternate modification is found at K172. The residue at position 172 (K172) is an N6-succinyllysine; alternate.

The protein belongs to the metallo-beta-lactamase superfamily. Glyoxalase II family. In terms of assembly, homodimer. Monomer. Interacts with TST. May interact with RELA. It depends on Fe(2+) as a cofactor. Ubiquitously expressed.

It localises to the cytoplasm. The protein resides in the nucleus. It is found in the mitochondrion matrix. It carries out the reaction S-sulfanylglutathione + O2 + H2O = sulfite + glutathione + 2 H(+). With respect to regulation, glutathione increases enzyme activity. Sulfur dioxygenase that plays an essential role in hydrogen sulfide catabolism in the mitochondrial matrix. Hydrogen sulfide (H(2)S) is first oxidized by SQRDL, giving rise to cysteine persulfide residues. ETHE1 consumes molecular oxygen to catalyze the oxidation of the persulfide, once it has been transferred to a thiophilic acceptor, such as glutathione (R-SSH). Plays an important role in metabolic homeostasis in mitochondria by metabolizing hydrogen sulfide and preventing the accumulation of supraphysiological H(2)S levels that have toxic effects, due to the inhibition of cytochrome c oxidase. First described as a protein that can shuttle between the nucleus and the cytoplasm and suppress p53-induced apoptosis by sequestering the transcription factor RELA/NFKB3 in the cytoplasm and preventing its accumulation in the nucleus. The polypeptide is Persulfide dioxygenase ETHE1, mitochondrial (ETHE1) (Homo sapiens (Human)).